A 494-amino-acid chain; its full sequence is UDP-N-acetylmuramoyl-L-alanyl-D-glutamate--L-lysine ligase (494 aa).

UDP-N-acetyl-alpha-D-muramoyl-L-alanyl-D-glutamate is bound at residue Ser-30. Gly-110 to Ser-116 contributes to the ATP binding site. UDP-N-acetyl-alpha-D-muramoyl-L-alanyl-D-glutamate is bound by residues Thr-152–Thr-153, Ser-179, and Arg-187. The residue at position 219 (Lys-219) is an N6-carboxylysine. The L-lysine recognition motif signature appears at Asp-406–Ala-409.

The protein belongs to the MurCDEF family. MurE subfamily. Carboxylation is probably crucial for Mg(2+) binding and, consequently, for the gamma-phosphate positioning of ATP.

The protein localises to the cytoplasm. It catalyses the reaction UDP-N-acetyl-alpha-D-muramoyl-L-alanyl-D-glutamate + L-lysine + ATP = UDP-N-acetyl-alpha-D-muramoyl-L-alanyl-gamma-D-glutamyl-L-lysine + ADP + phosphate + H(+). Its pathway is cell wall biogenesis; peptidoglycan biosynthesis. Catalyzes the addition of L-lysine to the nucleotide precursor UDP-N-acetylmuramoyl-L-alanyl-D-glutamate (UMAG) in the biosynthesis of bacterial cell-wall peptidoglycan. This chain is UDP-N-acetylmuramoyl-L-alanyl-D-glutamate--L-lysine ligase, found in Staphylococcus aureus (strain bovine RF122 / ET3-1).